Consider the following 351-residue polypeptide: UDP-3-O-acylglucosamine N-acyltransferase (351 aa).

His-240 acts as the Proton acceptor in catalysis.

This sequence belongs to the transferase hexapeptide repeat family. LpxD subfamily. In terms of assembly, homotrimer.

It catalyses the reaction a UDP-3-O-[(3R)-3-hydroxyacyl]-alpha-D-glucosamine + a (3R)-hydroxyacyl-[ACP] = a UDP-2-N,3-O-bis[(3R)-3-hydroxyacyl]-alpha-D-glucosamine + holo-[ACP] + H(+). The protein operates within bacterial outer membrane biogenesis; LPS lipid A biosynthesis. Functionally, catalyzes the N-acylation of UDP-3-O-acylglucosamine using 3-hydroxyacyl-ACP as the acyl donor. Is involved in the biosynthesis of lipid A, a phosphorylated glycolipid that anchors the lipopolysaccharide to the outer membrane of the cell. The protein is UDP-3-O-acylglucosamine N-acyltransferase of Pseudomonas syringae pv. tomato (strain ATCC BAA-871 / DC3000).